The chain runs to 746 residues: Protein psiN (746 aa).

The first 23 residues, 1–23 (MGNINKKLFYFLIQLITILIVLS), serve as a signal peptide directing secretion. At 24–679 (DDSYNSLLPL…KCQSAAVKAA (656 aa)) the chain is on the extracellular side. Asn-97 and Asn-124 each carry an N-linked (GlcNAc...) asparagine glycan. In terms of domain architecture, PA14 spans 125-276 (VTSDDPRIYS…YDYCGVCEGM (152 aa)). Residues Asn-319, Asn-353, Asn-380, Asn-477, Asn-553, Asn-628, and Asn-654 are each glycosylated (N-linked (GlcNAc...) asparagine). Residues 680-700 (VGVGAGAAAGIAIGGAIALGL) traverse the membrane as a helical segment. Over 701–746 (AAFGGKRGYDAWKSSRDNQIQTSSENPLYNPNPNQGDNPLYAANNS) the chain is Cytoplasmic. Residues 714 to 746 (SSRDNQIQTSSENPLYNPNPNQGDNPLYAANNS) are disordered. Polar residues predominate over residues 717–746 (DNQIQTSSENPLYNPNPNQGDNPLYAANNS).

It belongs to the prespore-cell-inducing factor family.

The protein localises to the membrane. This Dictyostelium discoideum (Social amoeba) protein is Protein psiN (psiN).